The following is a 299-amino-acid chain: Zinc finger protein 414 (299 aa).

2 stretches are compositionally biased toward polar residues: residues 1–20 and 69–81; these read MEEPSRPSSDTLTTVESSSG and DSCQTGSTNTGVG. Residues 1 to 98 are disordered; that stretch reads MEEPSRPSSD…PRRRPPPGKQ (98 aa). 2 C2H2-type zinc fingers span residues 99 to 123 and 135 to 159; these read IPCSSPGCCLSFPSVRDLAQHLRTH and FRCSALSCTESFPSMQELVAHGKLH. Residues 166–190 form a C2H2-type 3; degenerate zinc finger; sequence FKCENCLLRFRTHRSLFKHLHVCID. 2 disordered regions span residues 193–228 and 254–299; these read QNPAPPPPPALDKEPPVPERPPESDPSSSLGLPFPL and PRLR…GACR. Basic and acidic residues predominate over residues 203–215; the sequence is LDKEPPVPERPPE. Positions 217-228 are enriched in low complexity; it reads DPSSSLGLPFPL.

It belongs to the krueppel C2H2-type zinc-finger protein family.

The protein resides in the nucleus. May be involved in transcriptional regulation. The sequence is that of Zinc finger protein 414 (Znf414) from Mus musculus (Mouse).